The chain runs to 428 residues: Histidinol dehydrogenase (428 aa).

Residues Y127, Q185, and N208 each contribute to the NAD(+) site. S234, Q256, and H259 together coordinate substrate. Zn(2+)-binding residues include Q256 and H259. Catalysis depends on proton acceptor residues E323 and H324. 4 residues coordinate substrate: H324, D357, E411, and H416. A Zn(2+)-binding site is contributed by D357. H416 contributes to the Zn(2+) binding site.

It belongs to the histidinol dehydrogenase family. Requires Zn(2+) as cofactor.

It carries out the reaction L-histidinol + 2 NAD(+) + H2O = L-histidine + 2 NADH + 3 H(+). It functions in the pathway amino-acid biosynthesis; L-histidine biosynthesis; L-histidine from 5-phospho-alpha-D-ribose 1-diphosphate: step 9/9. In terms of biological role, catalyzes the sequential NAD-dependent oxidations of L-histidinol to L-histidinaldehyde and then to L-histidine. This Mannheimia succiniciproducens (strain KCTC 0769BP / MBEL55E) protein is Histidinol dehydrogenase.